The sequence spans 166 residues: Alanine racemase (166 aa).

The active-site Proton acceptor; specific for L-alanine is tyrosine 62. Methionine 110 contacts substrate.

This sequence belongs to the alanine racemase family. Pyridoxal 5'-phosphate serves as cofactor.

The catalysed reaction is L-alanine = D-alanine. The protein operates within amino-acid biosynthesis; D-alanine biosynthesis; D-alanine from L-alanine: step 1/1. Functionally, catalyzes the interconversion of L-alanine and D-alanine. May also act on other amino acids. This Piscirickettsia salmonis protein is Alanine racemase (alr).